The chain runs to 75 residues: Small ribosomal subunit protein bS18 (75 aa).

Belongs to the bacterial ribosomal protein bS18 family. Part of the 30S ribosomal subunit. Forms a tight heterodimer with protein bS6.

Binds as a heterodimer with protein bS6 to the central domain of the 16S rRNA, where it helps stabilize the platform of the 30S subunit. The protein is Small ribosomal subunit protein bS18 of Shewanella loihica (strain ATCC BAA-1088 / PV-4).